Consider the following 301-residue polypeptide: MPGIKEIRTKIKSVQNTRKITKAMEMVAASKMRKAQERMRAGRPYATKVREIAAHLMQANPEYSHPYLVEREVKAVGVVLVTTDKGLCGGLNTNISRVTLSKLKEFEQRSIKVQATAFGNKGLGLLTRIGAKLVSQEVQLGDKPDLDRLLGAIKVQLDDYLEGRIDALYVATTRFVNTMRQEPVFLRLLPLSNGLDDPFQSGVETLAKTAEIKSDYSWDYIYEPDAKSVIDDLLQRYVEGLLYQAVAENMASEQSARMVAMKSASDNAKKVIGDLQLVYNKTRQAAITKEISEIVGGAAAV.

The protein belongs to the ATPase gamma chain family. As to quaternary structure, F-type ATPases have 2 components, CF(1) - the catalytic core - and CF(0) - the membrane proton channel. CF(1) has five subunits: alpha(3), beta(3), gamma(1), delta(1), epsilon(1). CF(0) has three main subunits: a, b and c.

It localises to the cell inner membrane. Produces ATP from ADP in the presence of a proton gradient across the membrane. The gamma chain is believed to be important in regulating ATPase activity and the flow of protons through the CF(0) complex. This chain is ATP synthase gamma chain, found in Bordetella bronchiseptica (strain ATCC BAA-588 / NCTC 13252 / RB50) (Alcaligenes bronchisepticus).